A 1330-amino-acid polypeptide reads, in one-letter code: Sister chromatid cohesion protein PDS5 homolog A (1330 aa).

One copy of the HEAT repeat lies at 387–423 (SLVNDQLLGFVRERTLDKRWRVRKEAMMGLAQLYKKY). Positions 1138–1330 (VNKPLSATGR…AAQRQIDLQR (193 aa)) are disordered. Residues 1160–1171 (SNISVNSELSSS) are compositionally biased toward low complexity. Residues 1216–1225 (SDQATQGNST) show a composition bias toward polar residues.

The protein belongs to the PDS5 family. Interacts with the cohesin complex. Binds chromatin in a cohesin-dependent manner.

It localises to the nucleus. Functionally, may regulate sister chromatid cohesion during mitosis and couple it to DNA replication. In Gallus gallus (Chicken), this protein is Sister chromatid cohesion protein PDS5 homolog A.